The following is a 395-amino-acid chain: Calcium sensing receptor, chloroplastic (395 aa).

A compositionally biased stretch (low complexity) spans 1-12; it reads MAPVPVSVSATL. The interval 1–27 is disordered; that stretch reads MAPVPVSVSATLAPPPAAPPKTTSRSW. A chloroplast-targeting transit peptide spans 1–39; that stretch reads MAPVPVSVSATLAPPPAAPPKTTSRSWERRAPADAAFAA. Over 40–182 the chain is Lumenal, thylakoid; that stretch reads ASSVAGSAAL…TITSLGPEDY (143 aa). Residues 183–203 form a helical membrane-spanning segment; the sequence is VVAAGXAFLAYLLVPPVWSLV. The Stromal segment spans residues 204–395; it reads SSSLRGYKGD…TRKLLPGGVD (192 aa). In terms of domain architecture, Rhodanese spans 224 to 345; the sequence is TTQGYVLIDV…WAQSRLGTDS (122 aa). Thr377 is subject to Phosphothreonine.

In terms of processing, phosphorylated in both bundle sheath and mesophyll cells, under both low and high light regimes (70 vs 900 umol photons/m-2/s).

It is found in the plastid. The protein resides in the chloroplast thylakoid membrane. Functionally, modulates cytoplasmic Ca(2+) concentration and is crucial for proper stomatal regulation in response to elevated levels of external Ca(2+). May function by regulating concentrations of inositol 1,4,5-trisphosphate (IP3), which in turn triggers release of Ca(2+) from internal stores. May play a role in de-etiolation. The sequence is that of Calcium sensing receptor, chloroplastic from Zea mays (Maize).